The sequence spans 301 residues: Oxygen-dependent coproporphyrinogen-III oxidase (301 aa).

Residue Ser-94 coordinates substrate. His-98 and His-108 together coordinate a divalent metal cation. His-108 (proton donor) is an active-site residue. 110–112 (NVR) is a binding site for substrate. A divalent metal cation-binding residues include His-147 and His-177. The interval 242–277 (YVEFNLVYDRGTLFGLQSGGRTESILMSMPPLARWE) is important for dimerization. 260 to 262 (GGR) provides a ligand contact to substrate.

This sequence belongs to the aerobic coproporphyrinogen-III oxidase family. Homodimer. It depends on a divalent metal cation as a cofactor.

The protein localises to the cytoplasm. The enzyme catalyses coproporphyrinogen III + O2 + 2 H(+) = protoporphyrinogen IX + 2 CO2 + 2 H2O. It participates in porphyrin-containing compound metabolism; protoporphyrin-IX biosynthesis; protoporphyrinogen-IX from coproporphyrinogen-III (O2 route): step 1/1. Involved in the heme biosynthesis. Catalyzes the aerobic oxidative decarboxylation of propionate groups of rings A and B of coproporphyrinogen-III to yield the vinyl groups in protoporphyrinogen-IX. The protein is Oxygen-dependent coproporphyrinogen-III oxidase of Photobacterium profundum (strain SS9).